Reading from the N-terminus, the 210-residue chain is Large ribosomal subunit protein uL3 (210 aa).

Residues 125-151 (RHGQSRGPMSHGSRYHRRPGSMGPVAP) are disordered.

Belongs to the universal ribosomal protein uL3 family. As to quaternary structure, part of the 50S ribosomal subunit. Forms a cluster with proteins L14 and L19.

Its function is as follows. One of the primary rRNA binding proteins, it binds directly near the 3'-end of the 23S rRNA, where it nucleates assembly of the 50S subunit. This chain is Large ribosomal subunit protein uL3, found in Bacillus cereus (strain ATCC 14579 / DSM 31 / CCUG 7414 / JCM 2152 / NBRC 15305 / NCIMB 9373 / NCTC 2599 / NRRL B-3711).